A 183-amino-acid chain; its full sequence is Putative 3-methyladenine DNA glycosylase (183 aa).

Belongs to the DNA glycosylase MPG family.

This chain is Putative 3-methyladenine DNA glycosylase, found in Legionella pneumophila subsp. pneumophila (strain Philadelphia 1 / ATCC 33152 / DSM 7513).